Consider the following 410-residue polypeptide: Probable 2,3-bisphosphoglycerate-independent phosphoglycerate mutase (410 aa).

The protein belongs to the BPG-independent phosphoglycerate mutase family. A-PGAM subfamily.

The enzyme catalyses (2R)-2-phosphoglycerate = (2R)-3-phosphoglycerate. It participates in carbohydrate degradation; glycolysis; pyruvate from D-glyceraldehyde 3-phosphate: step 3/5. In terms of biological role, catalyzes the interconversion of 2-phosphoglycerate and 3-phosphoglycerate. The sequence is that of Probable 2,3-bisphosphoglycerate-independent phosphoglycerate mutase from Deinococcus radiodurans (strain ATCC 13939 / DSM 20539 / JCM 16871 / CCUG 27074 / LMG 4051 / NBRC 15346 / NCIMB 9279 / VKM B-1422 / R1).